Consider the following 200-residue polypeptide: GTP-binding protein ypt2 (200 aa).

16–23 is a binding site for GTP; sequence GDSGVGKS. The Effector region motif lies at 38–46; that stretch reads FITTIGIDF. GTP-binding positions include 64–68 and 122–125; these read DTAGQ and NKCD. S-geranylgeranyl cysteine attachment occurs at residues cysteine 199 and cysteine 200.

This sequence belongs to the small GTPase superfamily. Rab family.

The protein localises to the cell membrane. In terms of biological role, protein transport. Probably involved in vesicular traffic. The protein is GTP-binding protein ypt2 (ypt2) of Schizosaccharomyces pombe (strain 972 / ATCC 24843) (Fission yeast).